Consider the following 427-residue polypeptide: 3-phosphoshikimate 1-carboxyvinyltransferase (427 aa).

3-phosphoshikimate contacts are provided by Lys22, Ser23, and Arg27. Phosphoenolpyruvate is bound at residue Lys22. Positions 96 and 124 each coordinate phosphoenolpyruvate. Ser170, Ser171, Gln172, Ser198, Asp314, Asn337, and Lys341 together coordinate 3-phosphoshikimate. Gln172 provides a ligand contact to phosphoenolpyruvate. The Proton acceptor role is filled by Asp314. The phosphoenolpyruvate site is built by Arg345, Arg387, and Lys412.

It belongs to the EPSP synthase family. As to quaternary structure, monomer.

The protein localises to the cytoplasm. It catalyses the reaction 3-phosphoshikimate + phosphoenolpyruvate = 5-O-(1-carboxyvinyl)-3-phosphoshikimate + phosphate. It functions in the pathway metabolic intermediate biosynthesis; chorismate biosynthesis; chorismate from D-erythrose 4-phosphate and phosphoenolpyruvate: step 6/7. Functionally, catalyzes the transfer of the enolpyruvyl moiety of phosphoenolpyruvate (PEP) to the 5-hydroxyl of shikimate-3-phosphate (S3P) to produce enolpyruvyl shikimate-3-phosphate and inorganic phosphate. This is 3-phosphoshikimate 1-carboxyvinyltransferase from Sulfurovum sp. (strain NBC37-1).